We begin with the raw amino-acid sequence, 610 residues long: UvrABC system protein C (610 aa).

A GIY-YIG domain is found at 16 to 94 (SQPGVYRMYD…IKLYQPRYNV (79 aa)). One can recognise a UVR domain in the interval 204 to 239 (DQVLTQLIARMEKASQDLAFEEAARIRDQIQAVRRV).

This sequence belongs to the UvrC family. As to quaternary structure, interacts with UvrB in an incision complex.

The protein resides in the cytoplasm. The UvrABC repair system catalyzes the recognition and processing of DNA lesions. UvrC both incises the 5' and 3' sides of the lesion. The N-terminal half is responsible for the 3' incision and the C-terminal half is responsible for the 5' incision. This Salmonella paratyphi B (strain ATCC BAA-1250 / SPB7) protein is UvrABC system protein C.